The chain runs to 546 residues: Chaperonin GroEL 1 (546 aa).

ATP is bound by residues 29 to 32, 86 to 90, glycine 414, and aspartate 499; these read TLGP and DGTTT.

It belongs to the chaperonin (HSP60) family. In terms of assembly, forms a cylinder of 14 subunits composed of two heptameric rings stacked back-to-back. Interacts with the co-chaperonin GroES.

Its subcellular location is the cytoplasm. It catalyses the reaction ATP + H2O + a folded polypeptide = ADP + phosphate + an unfolded polypeptide.. Functionally, together with its co-chaperonin GroES, plays an essential role in assisting protein folding. The GroEL-GroES system forms a nano-cage that allows encapsulation of the non-native substrate proteins and provides a physical environment optimized to promote and accelerate protein folding. This is Chaperonin GroEL 1 from Roseiflexus sp. (strain RS-1).